Reading from the N-terminus, the 327-residue chain is Movement protein (327 aa).

A coiled-coil region spans residues 297 to 327 (SASSSNTENELARVSQNIDLLKNKLKEICGE).

This sequence belongs to the caulimoviridae movement protein family. In terms of assembly, homotrimer, through the coiled-coil domain. Interacts with VAP. May interact (via N-terminus) with host prenylated Rab acceptor protein 1D (PRA1D).

It is found in the host cell junction. The protein localises to the host plasmodesma. Functionally, transports viral genome to neighboring plant cells directly through plasmosdesmata, without any budding. The movement protein allows efficient cell to cell propagation, by bypassing the host cell wall barrier. Acts by forming tubules structures that increase the size exclusion limit (SEL) of plasmodesmata, thereby allowing viral ribonucleocapsids to spread directly to neighboring cells. The polypeptide is Movement protein (Cauliflower mosaic virus (strain Strasbourg) (CaMV)).